The following is a 498-amino-acid chain: ATP synthase subunit beta, chloroplastic (498 aa).

An ATP-binding site is contributed by 172–179; the sequence is GGAGVGKT.

Belongs to the ATPase alpha/beta chains family. F-type ATPases have 2 components, CF(1) - the catalytic core - and CF(0) - the membrane proton channel. CF(1) has five subunits: alpha(3), beta(3), gamma(1), delta(1), epsilon(1). CF(0) has four main subunits: a(1), b(1), b'(1) and c(9-12).

The protein localises to the plastid. The protein resides in the chloroplast thylakoid membrane. It carries out the reaction ATP + H2O + 4 H(+)(in) = ADP + phosphate + 5 H(+)(out). In terms of biological role, produces ATP from ADP in the presence of a proton gradient across the membrane. The catalytic sites are hosted primarily by the beta subunits. The sequence is that of ATP synthase subunit beta, chloroplastic from Brasenia schreberi (Water shield).